We begin with the raw amino-acid sequence, 384 residues long: MSEQLVTPENVTTKDGKINLLDLNRQQMREFFKDLGEKPFRADQVMKWMYHYCCDNFDEMTDINKVLRGKLKEVAEIRAPEVVEEQRSSDGTIKWAIAVGDQRVETVYIPEDDRATLCVSSQVGCALECKFCSTAQQGFNRNLRVSEIIGQVWRAAKIVGAAKVTGQRPITNVVMMGMGEPLLNLNNVVPAMEIMLDDFGFGLSKRRVTLSTSGVVPALDKLGDMIDVALAISLHAPNDEIRDEIVPINKKYNIETFLAAVRRYLGKSNANQGRVTIEYVMLDHVNDGTEHAHQLAELLKDTPCKINLIPWNPFPGAPYGRSSNSRIDRFSKVLMSYGFTTIVRKTRGDDIDAACGQLAGDVIDRTKRTLRKRMQGEAIDIKAV.

The active-site Proton acceptor is the glutamate 105. The Radical SAM core domain maps to 111–350; the sequence is EDDRATLCVS…TIVRKTRGDD (240 aa). A disulfide bond links cysteine 118 and cysteine 355. Residues cysteine 125, cysteine 129, and cysteine 132 each contribute to the [4Fe-4S] cluster site. Residues 179-180, serine 211, 233-235, and asparagine 312 each bind S-adenosyl-L-methionine; these read GE and SLH. Residue cysteine 355 is the S-methylcysteine intermediate of the active site.

The protein belongs to the radical SAM superfamily. RlmN family. Requires [4Fe-4S] cluster as cofactor.

It localises to the cytoplasm. It carries out the reaction adenosine(2503) in 23S rRNA + 2 reduced [2Fe-2S]-[ferredoxin] + 2 S-adenosyl-L-methionine = 2-methyladenosine(2503) in 23S rRNA + 5'-deoxyadenosine + L-methionine + 2 oxidized [2Fe-2S]-[ferredoxin] + S-adenosyl-L-homocysteine. The catalysed reaction is adenosine(37) in tRNA + 2 reduced [2Fe-2S]-[ferredoxin] + 2 S-adenosyl-L-methionine = 2-methyladenosine(37) in tRNA + 5'-deoxyadenosine + L-methionine + 2 oxidized [2Fe-2S]-[ferredoxin] + S-adenosyl-L-homocysteine. In terms of biological role, specifically methylates position 2 of adenine 2503 in 23S rRNA and position 2 of adenine 37 in tRNAs. m2A2503 modification seems to play a crucial role in the proofreading step occurring at the peptidyl transferase center and thus would serve to optimize ribosomal fidelity. The sequence is that of Dual-specificity RNA methyltransferase RlmN from Escherichia coli O6:H1 (strain CFT073 / ATCC 700928 / UPEC).